Reading from the N-terminus, the 198-residue chain is Ribonuclease HII (198 aa).

The RNase H type-2 domain occupies 14 to 198 (GVIAGVDEVG…RNFAPISRAL (185 aa)). A divalent metal cation-binding residues include aspartate 20, glutamate 21, and aspartate 112.

The protein belongs to the RNase HII family. It depends on Mn(2+) as a cofactor. Requires Mg(2+) as cofactor.

The protein resides in the cytoplasm. It catalyses the reaction Endonucleolytic cleavage to 5'-phosphomonoester.. Functionally, endonuclease that specifically degrades the RNA of RNA-DNA hybrids. This Wolbachia sp. subsp. Drosophila simulans (strain wRi) protein is Ribonuclease HII.